The primary structure comprises 151 residues: Deoxyuridine 5'-triphosphate nucleotidohydrolase (151 aa).

Substrate is bound by residues 70-72 (RSG), N83, 87-89 (LID), and M97.

The protein belongs to the dUTPase family. Requires Mg(2+) as cofactor.

It carries out the reaction dUTP + H2O = dUMP + diphosphate + H(+). Its pathway is pyrimidine metabolism; dUMP biosynthesis; dUMP from dCTP (dUTP route): step 2/2. Functionally, this enzyme is involved in nucleotide metabolism: it produces dUMP, the immediate precursor of thymidine nucleotides and it decreases the intracellular concentration of dUTP so that uracil cannot be incorporated into DNA. The chain is Deoxyuridine 5'-triphosphate nucleotidohydrolase from Pseudomonas fluorescens (strain SBW25).